A 484-amino-acid polypeptide reads, in one-letter code: MSLSRAAIVDQLKEIVGADRVITDETVLKKNSIDRFRKFPDIHGIYTLPIPAAVVKLGSTEQVSRVLNFMNAHKINGVPRTGASATEGGLETVVENSVVLDGSAMNQIINIDIENMQATAQCGVPLEVLENALREKGYTTGHSPQSKPLAQMGGLVATRSIGQFSTLYGAIEDMVVGLEAVLADGTVTRIKNVPRRAAGPDIRHIIIGNEGALCYITEVTVKIFKFTPENNLFYGYILEDMKTGFNILREIMVEGYRPSIARLYDAEDGTQHFTHFADGKCVLIFMAEGNPRIAKATGEGIAEIVARYPQCQRVDSKLIETWFNNLNWGPDKVAAERVQILKTGNMGFTTEVSGCWSCIHEIYESVINRIRTEFPHADDITMLGGHSSHSYQNGTNMYFVYDYNVVNCKPEEEIDKYHNPLNKIICEETIRLGGSMVHHHGIGKHRVHWSKLEHGSAWALLEGLKKQFDPNGIMNTGTIYPIEK.

Positions 47–226 (TLPIPAAVVK…TEVTVKIFKF (180 aa)) constitute an FAD-binding PCMH-type domain.

The protein belongs to the FAD-binding oxidoreductase/transferase type 4 family.

This is an uncharacterized protein from Escherichia coli O157:H7.